Consider the following 305-residue polypeptide: Glycine--tRNA ligase alpha subunit (305 aa).

This sequence belongs to the class-II aminoacyl-tRNA synthetase family. Tetramer of two alpha and two beta subunits.

It localises to the cytoplasm. It catalyses the reaction tRNA(Gly) + glycine + ATP = glycyl-tRNA(Gly) + AMP + diphosphate. This is Glycine--tRNA ligase alpha subunit from Streptococcus pneumoniae (strain P1031).